A 579-amino-acid chain; its full sequence is uncharacterized protein (579 aa).

The next 3 helical transmembrane spans lie at I173–A193, F196–A216, and Y218–A238.

This sequence belongs to the TMCO4 family.

The protein localises to the cytoplasm. It localises to the nucleus membrane. This is an uncharacterized protein from Schizosaccharomyces pombe (strain 972 / ATCC 24843) (Fission yeast).